Consider the following 2188-residue polypeptide: Glutamate synthase 2 [NADH], chloroplastic (2188 aa).

A chloroplast-targeting transit peptide spans 1–30 (MSAAQGLALKLRAAPAAGGVRGEKRRRAAS). Disordered stretches follow at residues 14 to 40 (APAA…ARPR) and 61 to 94 (VAPR…PESS). Positions 65–80 (ASASRQAEAGAGAGAA) are enriched in low complexity. The active-site Nucleophile is the cysteine 107. A Glutamine amidotransferase type-2 domain is found at 107–511 (CGVGFIAELS…PGMMLLVDFE (405 aa)). 1198–1255 (LAETHQTLVANGLRGRAVLQTDGQMKTGRDVAVACLLGAEEFGFSTAPLITLGCIMMR) contacts FMN. 3 residues coordinate [3Fe-4S] cluster: cysteine 1251, cysteine 1257, and cysteine 1262. 1974 to 1988 (GGGDTGTDCIGTSIR) contributes to the NAD(+) binding site.

The protein belongs to the glutamate synthase family. Monomer. [3Fe-4S] cluster serves as cofactor. It depends on FAD as a cofactor. The cofactor is FMN. Expressed in leaf blades and sheaths.

The protein localises to the plastid. The protein resides in the chloroplast. It catalyses the reaction 2 L-glutamate + NAD(+) = L-glutamine + 2-oxoglutarate + NADH + H(+). The protein operates within amino-acid biosynthesis; L-glutamate biosynthesis via GLT pathway; L-glutamate from 2-oxoglutarate and L-glutamine (NAD(+) route): step 1/1. It participates in energy metabolism; nitrogen metabolism. In terms of biological role, involved in glutamate biosynthesis. This is Glutamate synthase 2 [NADH], chloroplastic from Oryza sativa subsp. japonica (Rice).